Here is a 101-residue protein sequence, read N- to C-terminus: Small ribosomal subunit protein uS14 (101 aa).

Belongs to the universal ribosomal protein uS14 family. In terms of assembly, part of the 30S ribosomal subunit. Contacts proteins S3 and S10.

Functionally, binds 16S rRNA, required for the assembly of 30S particles and may also be responsible for determining the conformation of the 16S rRNA at the A site. This Cupriavidus necator (strain ATCC 17699 / DSM 428 / KCTC 22496 / NCIMB 10442 / H16 / Stanier 337) (Ralstonia eutropha) protein is Small ribosomal subunit protein uS14.